Here is a 269-residue protein sequence, read N- to C-terminus: Bis(5'-nucleosyl)-tetraphosphatase, symmetrical (269 aa).

The protein belongs to the Ap4A hydrolase family.

It catalyses the reaction P(1),P(4)-bis(5'-adenosyl) tetraphosphate + H2O = 2 ADP + 2 H(+). Functionally, hydrolyzes diadenosine 5',5'''-P1,P4-tetraphosphate to yield ADP. The protein is Bis(5'-nucleosyl)-tetraphosphatase, symmetrical of Vibrio vulnificus (strain YJ016).